A 913-amino-acid polypeptide reads, in one-letter code: Striatin-interacting protein homolog (913 aa).

3 stretches are compositionally biased toward low complexity: residues 177-188, 195-204, and 791-811; these read QQQQQQQQNENE, TNFTTTTTTT, and NNNN…NNDN. Disordered stretches follow at residues 177–204 and 791–814; these read QQQQ…TTTT and NNNN…NGLT.

The protein belongs to the STRIP family.

This is Striatin-interacting protein homolog (fam40) from Dictyostelium discoideum (Social amoeba).